The chain runs to 237 residues: NADH-ubiquinone oxidoreductase assembly factor N7BML (237 aa).

Residues 214 to 223 (VEKERDDSGK) are compositionally biased toward basic and acidic residues. The disordered stretch occupies residues 214–237 (VEKERDDSGKPAEWTPKAAVRRRG).

It belongs to the complex I NDUFA12 subunit family.

The protein localises to the mitochondrion. Acts as an assembly factor of mitochondrial complex I. This Yarrowia lipolytica (strain CLIB 122 / E 150) (Yeast) protein is NADH-ubiquinone oxidoreductase assembly factor N7BML.